A 490-amino-acid polypeptide reads, in one-letter code: MRSNPTTSGSEVSAVEKKNLGRIVKIIGPVLDVAFPPGKMPNIYNALVVQGRDNEQTNVTCEVQQLLGNNRVRAVAMSDTDGLMRGMAVINTGAPISVPVGGSTLGRIFNVLGQPVDNLGPVDTNTTSPIHRSAPAFIQLDTKLSIFETGIKVVDLLAPYRRGGKIGLFGGAGVGKTVLIMELINNIAKAHGGVSVFGGVGERTREGNDLYMEMKESGVINEENIAESKVALVYGQMNEPPGARMRVGLTALTMAEYFRDVNEQDVLLFIDNIFRFVQAGSEVSALLGRMPSAVGYQPTLSTEMGTLQERITSTKEGSITSIQAVYVPADDLTDPAPATTFAHLDATTVLSRGLAAKGIYPAVDPLDSTSTMLQPRIVGEEHYETAQRVKQTLQRYKELQDIIAILGLDELSEEDRLTVARARKIERFLSQPFFVAEVFTGSPGKYVGLAETIRGFQLILSGELDVLPEQAFYLVGNIDEATAKAMNLKT.

170–177 (GGAGVGKT) provides a ligand contact to ATP.

Belongs to the ATPase alpha/beta chains family. In terms of assembly, F-type ATPases have 2 components, CF(1) - the catalytic core - and CF(0) - the membrane proton channel. CF(1) has five subunits: alpha(3), beta(3), gamma(1), delta(1), epsilon(1). CF(0) has four main subunits: a(1), b(1), b'(1) and c(9-12).

Its subcellular location is the plastid. The protein localises to the chloroplast thylakoid membrane. It catalyses the reaction ATP + H2O + 4 H(+)(in) = ADP + phosphate + 5 H(+)(out). Its function is as follows. Produces ATP from ADP in the presence of a proton gradient across the membrane. The catalytic sites are hosted primarily by the beta subunits. This is ATP synthase subunit beta, chloroplastic from Convolvulus arvensis (Field bindweed).